The primary structure comprises 311 residues: Putative F-box protein At1g31090 (311 aa).

The region spanning 4-53 (GANSDSIPTDLIYEILSRLSVKPITRFRCVSKLWESIICRQDFTELFHNR) is the F-box domain. The interval 287–311 (RPAEQNTSTSSREDHLVRTVKRKRA) is disordered.

This chain is Putative F-box protein At1g31090, found in Arabidopsis thaliana (Mouse-ear cress).